The chain runs to 425 residues: Cyclin-K (425 aa).

The disordered stretch occupies residues 262–425; that stretch reads GKQPIPQQPP…RRYLDDDRNL (164 aa). Positions 366–377 are enriched in low complexity; it reads AEPAAASELDPA. The span at 379 to 399 shows a compositional bias: pro residues; the sequence is GPAPPLPHGAPPPLPHRPPPT.

Belongs to the cyclin family.

It is found in the nucleus. Functionally, regulatory subunit of cyclin-dependent kinases that mediates activation of target kinases. Plays a role in transcriptional regulation via its role in regulating the phosphorylation of the C-terminal domain (CTD) of the large subunit of RNA polymerase II (POLR2A). In Danio rerio (Zebrafish), this protein is Cyclin-K (ccnk).